Reading from the N-terminus, the 813-residue chain is Nuclear cap-binding protein subunit 1 (813 aa).

The region spanning 31–243 is the MIF4G domain; it reads EERLETLILR…CLWAQIRKLR (213 aa). Residues 667–716 form a disordered region; that stretch reads KERLDRNAESSSSESEEETAPAGTDAVTPQRRRKKPIGDNADKPTEEQVE. The span at 702 to 716 shows a compositional bias: basic and acidic residues; that stretch reads PIGDNADKPTEEQVE.

It belongs to the NCBP1 family. Component of the nuclear cap-binding complex (CBC), a heterodimer composed of Cbp80 and Cbp20 that interacts with m7GpppG-capped RNA.

The protein localises to the nucleus. Functionally, component of the cap-binding complex (CBC), which binds cotranscriptionally to the 5'-cap of pre-mRNAs and is involved in various processes such as pre-mRNA splicing and RNA-mediated gene silencing (RNAi). The CBC complex is involved in miRNA-mediated RNA interference and is required for primary microRNAs (miRNAs) processing. Also involved in innate immunity via the short interfering RNAs (siRNAs) processing machinery by restricting the viral RNA production. In the CBC complex, Cbp80 does not bind directly capped RNAs (m7GpppG-capped RNA) but is required to stabilize the movement of the N-terminal loop of Cbp20 and lock the CBC into a high affinity cap-binding state with the cap structure. This Aedes aegypti (Yellowfever mosquito) protein is Nuclear cap-binding protein subunit 1 (Cbp80).